We begin with the raw amino-acid sequence, 140 residues long: UPF0336 protein TW736 (140 aa).

It belongs to the UPF0336 family.

The chain is UPF0336 protein TW736 from Tropheryma whipplei (strain TW08/27) (Whipple's bacillus).